The sequence spans 575 residues: Alpha-humulene synthase (575 aa).

The Mg(2+) site is built by aspartate 325, aspartate 329, aspartate 469, and glutamate 477. Residues 325–329 carry the DDXXD motif motif; the sequence is DDLYD.

It belongs to the terpene synthase family. Tpsa subfamily. It depends on Mg(2+) as a cofactor. Requires Mn(2+) as cofactor.

The enzyme catalyses (2E,6E)-farnesyl diphosphate = alpha-humulene + diphosphate. It functions in the pathway sesquiterpene biosynthesis. Its pathway is terpene metabolism; oleoresin biosynthesis. Functionally, terpene synthase (TPS) involved in the biosynthesis of sesquiterpene natural products included in conifer oleoresin secretions and volatile emissions; these compounds contribute to biotic and abiotic stress defense against herbivores and pathogens. Catalyzes the conversion of (2E,6E)-farnesyl diphosphate (FPP) to (1E,4E,8E)-alpha-humulene. The protein is Alpha-humulene synthase of Picea glauca (White spruce).